A 449-amino-acid polypeptide reads, in one-letter code: Allantoinase (449 aa).

Residues H61, H63, K148, H184, H240, and D313 each coordinate Zn(2+). K148 carries the N6-carboxylysine modification.

The protein belongs to the metallo-dependent hydrolases superfamily. Allantoinase family. Homotetramer. The cofactor is Zn(2+). Carboxylation allows a single lysine to coordinate two zinc ions.

The enzyme catalyses (S)-allantoin + H2O = allantoate + H(+). It participates in nitrogen metabolism; (S)-allantoin degradation; allantoate from (S)-allantoin: step 1/1. Functionally, catalyzes the conversion of allantoin (5-ureidohydantoin) to allantoic acid by hydrolytic cleavage of the five-member hydantoin ring. This chain is Allantoinase, found in Desulfitobacterium hafniense (strain DSM 10664 / DCB-2).